The following is a 313-amino-acid chain: Porphobilinogen deaminase (313 aa).

Cysteine 242 is modified (S-(dipyrrolylmethanemethyl)cysteine).

The protein belongs to the HMBS family. Monomer. Requires dipyrromethane as cofactor.

It catalyses the reaction 4 porphobilinogen + H2O = hydroxymethylbilane + 4 NH4(+). It functions in the pathway porphyrin-containing compound metabolism; protoporphyrin-IX biosynthesis; coproporphyrinogen-III from 5-aminolevulinate: step 2/4. Functionally, tetrapolymerization of the monopyrrole PBG into the hydroxymethylbilane pre-uroporphyrinogen in several discrete steps. This chain is Porphobilinogen deaminase, found in Escherichia coli (strain SE11).